We begin with the raw amino-acid sequence, 436 residues long: MSIQKVHAREILDSRGNPTIEVEITTGKGMFRSCVPSGASTGVHEAVELRDGDKKRYGGKGVLKAVENVNTIIGPALLGKNVLNQAELDEMMIKLDGTNNKGKLGANAILGCSMSICRAAAAEKGLPLYKYLAELTGHKEMTMPVPCFNVINGGAHAGNALAMQEFMICPTGATNFHEALRMAAETYQCLKVVIKAKYGQDATNVGDEGGFAPNVSGAREALDLLVEAIAKAGYTGKIEIAMDCAASEFYNEETKKYDLGKKIPADKKDPSLVKDVDGLIAEYVDYGKHYPIASIEDPFAEDDWAAWNKFTVEHGNFQIVGDDLLVTNPARVQMAMDKNACNSVLIKVNQIGTLTETFKTIKMAQEKGWGVMASHRSGETEDTFIADLVVGLNCKQIKTGAPCRSERLCKYNQLMRIEEELGNIPYAGKNWRNSTA.

Ser40 is a Mg(2+) binding site. A disulfide bond links Cys147 and Cys169. Gln164 and Glu208 together coordinate (2R)-2-phosphoglycerate. The active-site Proton donor is the Glu208. Mg(2+) is bound by residues Asp243, Glu296, and Asp322. Asp322 contacts (2R)-2-phosphoglycerate. The active-site Proton acceptor is the Lys347. Arg376 and Ser377 together coordinate (2R)-2-phosphoglycerate.

It belongs to the enolase family. As to quaternary structure, homodimer. Homotetramer. Interacts with methyltransferase METH; the interaction inhibits METH catalytic activity; 2-phosphoglycerate binding to ENO prevents the interaction with METH. The cofactor is Mg(2+).

It localises to the cytoplasm. The protein resides in the nucleus. The enzyme catalyses (2R)-2-phosphoglycerate = phosphoenolpyruvate + H2O. It functions in the pathway carbohydrate degradation; glycolysis; pyruvate from D-glyceraldehyde 3-phosphate: step 4/5. Its function is as follows. Glycolytic enzyme that catalyzes the conversion of 2-phosphoglycerate to phosphoenolpyruvate. Inhibits tRNA methyltransferase METH catalytic activity in the absence of 2-phosphoglycerate. The chain is Enolase 1 from Entamoeba histolytica (strain ATCC 30459 / HM-1:IMSS / ABRM).